Here is a 253-residue protein sequence, read N- to C-terminus: MGTILDKIVEQKKKEVAELYEIYTPVKTKRKTQSLVEALQQFTVIAEVKRASPSKGDINLHVDVRKQVGTYEKCGAGAVSVLTDGQFFKGSFHDLQTAREESNIPLLCKDFIIDKIQIDRAYEAGADIILLIVAALTKEKLKELYSYVLEKGLEAIVEVHDEQELETAIVLNPHVIGINNRNLKTFEVDLSQTEKLGKRLNEEKLLWISESGIHSKEDIIRVKRAGAKGVLVGEALMTSSSISSFFEDCKVNI.

Belongs to the TrpC family.

It catalyses the reaction 1-(2-carboxyphenylamino)-1-deoxy-D-ribulose 5-phosphate + H(+) = (1S,2R)-1-C-(indol-3-yl)glycerol 3-phosphate + CO2 + H2O. It participates in amino-acid biosynthesis; L-tryptophan biosynthesis; L-tryptophan from chorismate: step 4/5. The chain is Indole-3-glycerol phosphate synthase from Bacillus cereus (strain ATCC 14579 / DSM 31 / CCUG 7414 / JCM 2152 / NBRC 15305 / NCIMB 9373 / NCTC 2599 / NRRL B-3711).